The primary structure comprises 542 residues: Adenosylmethionine-8-amino-7-oxononanoate aminotransferase (542 aa).

Position 170–171 (Gly-170–Ser-171) interacts with pyridoxal 5'-phosphate. Tyr-205 provides a ligand contact to substrate. Asp-311 is a pyridoxal 5'-phosphate binding site. Substrate contacts are provided by Lys-340, Gly-375, and Arg-470. N6-(pyridoxal phosphate)lysine is present on Lys-340. A disordered region spans residues Asp-509–Val-542. A compositionally biased stretch (basic and acidic residues) spans Lys-515–Asp-524.

This sequence belongs to the class-III pyridoxal-phosphate-dependent aminotransferase family. BioA subfamily. Homodimer. The cofactor is pyridoxal 5'-phosphate.

The protein resides in the cytoplasm. The catalysed reaction is (8S)-8-amino-7-oxononanoate + S-adenosyl-L-methionine = S-adenosyl-4-methylsulfanyl-2-oxobutanoate + (7R,8S)-7,8-diammoniononanoate. It functions in the pathway cofactor biosynthesis; biotin biosynthesis; 7,8-diaminononanoate from 8-amino-7-oxononanoate (SAM route): step 1/1. Functionally, catalyzes the transfer of the alpha-amino group from S-adenosyl-L-methionine (SAM) to 7-keto-8-aminopelargonic acid (KAPA) to form 7,8-diaminopelargonic acid (DAPA). It is the only aminotransferase known to utilize SAM as an amino donor. The sequence is that of Adenosylmethionine-8-amino-7-oxononanoate aminotransferase from Nitratidesulfovibrio vulgaris (strain ATCC 29579 / DSM 644 / CCUG 34227 / NCIMB 8303 / VKM B-1760 / Hildenborough) (Desulfovibrio vulgaris).